Reading from the N-terminus, the 444-residue chain is Aspartate--tRNA(Asp/Asn) ligase (444 aa).

Position 176 (glutamate 176) interacts with L-aspartate. The aspartate stretch occupies residues 198–201 (QLFK). Arginine 220 lines the L-aspartate pocket. ATP contacts are provided by residues 220–222 (RAE), 228–230 (RHL), and glutamate 367. Residues glutamate 367 and serine 370 each coordinate Mg(2+). L-aspartate is bound by residues serine 370 and arginine 374. Residue 415 to 418 (GCER) participates in ATP binding.

This sequence belongs to the class-II aminoacyl-tRNA synthetase family. Type 2 subfamily. As to quaternary structure, homodimer. The cofactor is Mg(2+).

The protein localises to the cytoplasm. It carries out the reaction tRNA(Asx) + L-aspartate + ATP = L-aspartyl-tRNA(Asx) + AMP + diphosphate. In terms of biological role, aspartyl-tRNA synthetase with relaxed tRNA specificity since it is able to aspartylate not only its cognate tRNA(Asp) but also tRNA(Asn). Reaction proceeds in two steps: L-aspartate is first activated by ATP to form Asp-AMP and then transferred to the acceptor end of tRNA(Asp/Asn). The polypeptide is Aspartate--tRNA(Asp/Asn) ligase (Methanosarcina barkeri (strain Fusaro / DSM 804)).